The chain runs to 367 residues: Heme A synthase (367 aa).

The next 5 helical transmembrane spans lie at 25–45 (ALRFWLGFVLLALFCLVLVGG), 111–131 (LIARAIGVIFALPLIYFWLTG), 139–159 (WPLVGILALGGLQGGIGWWMV), 174–194 (LATHLVMACLIFAGCMWIMRG), and 210–230 (GFAAAIAIFSLFQIYLGALVA). Residue His-274 coordinates heme. The next 3 helical transmembrane spans lie at 276–296 (IGAYTLFALTLINMVIALRAA), 305–325 (AILLFVLVTLQAAIGIATLLM), and 327–347 (VPLHWGLLHQAGALVVFGFAV). His-335 contributes to the heme binding site.

It belongs to the COX15/CtaA family. Type 2 subfamily. Interacts with CtaB. Requires heme b as cofactor.

Its subcellular location is the cell membrane. It catalyses the reaction Fe(II)-heme o + 2 A + H2O = Fe(II)-heme a + 2 AH2. It functions in the pathway porphyrin-containing compound metabolism; heme A biosynthesis; heme A from heme O: step 1/1. Its function is as follows. Catalyzes the conversion of heme O to heme A by two successive hydroxylations of the methyl group at C8. The first hydroxylation forms heme I, the second hydroxylation results in an unstable dihydroxymethyl group, which spontaneously dehydrates, resulting in the formyl group of heme A. This chain is Heme A synthase, found in Rhizobium johnstonii (strain DSM 114642 / LMG 32736 / 3841) (Rhizobium leguminosarum bv. viciae).